A 195-amino-acid polypeptide reads, in one-letter code: tRNA (pseudouridine(54)-N(1))-methyltransferase (195 aa).

Residue Leu129 coordinates S-adenosyl-L-methionine.

This sequence belongs to the methyltransferase superfamily. TrmY family. As to quaternary structure, homodimer.

It is found in the cytoplasm. It catalyses the reaction pseudouridine(54) in tRNA + S-adenosyl-L-methionine = N(1)-methylpseudouridine(54) in tRNA + S-adenosyl-L-homocysteine + H(+). In terms of biological role, specifically catalyzes the N1-methylation of pseudouridine at position 54 (Psi54) in tRNAs. This Methanocorpusculum labreanum (strain ATCC 43576 / DSM 4855 / Z) protein is tRNA (pseudouridine(54)-N(1))-methyltransferase.